A 287-amino-acid polypeptide reads, in one-letter code: Agamous-like MADS-box protein AGL53 (287 aa).

Residues 30 to 78 form the MADS-box domain; the sequence is STAKKTTNLSMREQTMFKKALELSTLCNIDVCVIYYGRDGKLIKTWPED. The interval 151–171 is disordered; the sequence is EFGQTRAVSSTTNPLSPPPSL.

In terms of assembly, interacts with MEE14/CBP1.

The protein resides in the nucleus. In terms of biological role, probable transcription factor that may function in the maintenance of the proper function of the central cell in pollen tube attraction. This is Agamous-like MADS-box protein AGL53 from Arabidopsis thaliana (Mouse-ear cress).